The primary structure comprises 182 residues: P21 prophage-derived terminase small subunit (182 aa).

31 to 36 contacts ATP; the sequence is SKGSKG.

This sequence belongs to the terminase small subunit family. As to quaternary structure, heterooligomer of gp1 and gp2.

Involved in the initiation of the phage DNA packaging into the prohead. Processes replicating concatemeric DNA into pieces of unit length with cohesive ends. The chain is P21 prophage-derived terminase small subunit (nohA) from Escherichia coli O6:H1 (strain CFT073 / ATCC 700928 / UPEC).